Consider the following 266-residue polypeptide: Luciferase (266 aa).

Residues 22–41 traverse the membrane as a helical segment; the sequence is GLATACCAVAVASAIAFPYI.

Belongs to the fungal luciferase family.

It is found in the membrane. It catalyses the reaction 3-hydroxyhispidin + O2 = (E)-caffeoylpyruvate + hnu + CO2. It carries out the reaction 3-hydroxyhispidin + O2 = 4-[(E)-2-(3,4-dihydroxyphenyl)ethenyl]-1,7-dihydroxy-2,3,5-trioxabicyclo[2.2.2]oct-7-en-6-one. Luciferase; part of the gene cluster that mediates the fungal bioluminescence cycle. Uses the fungal luciferin 3-hydroxyhispidin as a substrate to produce an endoperoxide as a high-energy intermediate with decomposition that yields oxyluciferin (also known as caffeoylpyruvate) and light emission. The fungal bioluminescence cycle begins with the hispidin synthetase that catalyzes the formation of hispidin which is further hydroxylated by the hispidin-3-hydroxylase, yielding the fungal luciferin 3-hydroxyhispidin. The luciferase then produces an endoperoxide as a high-energy intermediate with decomposition that yields oxyluciferin and light emission. Oxyluciferin can be recycled to caffeic acid by caffeoylpyruvate hydrolase. This Armillaria ostoyae (Armillaria root rot fungus) protein is Luciferase.